The chain runs to 353 residues: Nicotinate-nucleotide--dimethylbenzimidazole phosphoribosyltransferase (353 aa).

E320 acts as the Proton acceptor in catalysis.

This sequence belongs to the CobT family.

It carries out the reaction 5,6-dimethylbenzimidazole + nicotinate beta-D-ribonucleotide = alpha-ribazole 5'-phosphate + nicotinate + H(+). The protein operates within nucleoside biosynthesis; alpha-ribazole biosynthesis; alpha-ribazole from 5,6-dimethylbenzimidazole: step 1/2. Functionally, catalyzes the synthesis of alpha-ribazole-5'-phosphate from nicotinate mononucleotide (NAMN) and 5,6-dimethylbenzimidazole (DMB). The sequence is that of Nicotinate-nucleotide--dimethylbenzimidazole phosphoribosyltransferase from Pseudoalteromonas translucida (strain TAC 125).